Here is a 208-residue protein sequence, read N- to C-terminus: Small ribosomal subunit protein uS4 (208 aa).

Residues 31-50 (SALDKRAYGPGQHGQRRTKT) form a disordered region. Residues 98–161 (RRLDNVVYRM…KSNPQVVRAM (64 aa)) enclose the S4 RNA-binding domain.

It belongs to the universal ribosomal protein uS4 family. In terms of assembly, part of the 30S ribosomal subunit. Contacts protein S5. The interaction surface between S4 and S5 is involved in control of translational fidelity.

Its function is as follows. One of the primary rRNA binding proteins, it binds directly to 16S rRNA where it nucleates assembly of the body of the 30S subunit. In terms of biological role, with S5 and S12 plays an important role in translational accuracy. This chain is Small ribosomal subunit protein uS4, found in Helicobacter pylori (strain J99 / ATCC 700824) (Campylobacter pylori J99).